The chain runs to 446 residues: Nuclear distribution protein nudF (446 aa).

The region spanning 9–41 (QAEELHKSMVAYLSSIKASQSSNTLREELGIGD) is the LisH domain. Residues 60 to 86 (TGIARLQRKILDLESKITSLQAELDSV) adopt a coiled-coil conformation. WD repeat units lie at residues 113–154 (SHRD…RTLK), 156–196 (HMRG…ANIR), 200–240 (GHDH…CVRT), 243–282 (SNSIWFLDVSPSFDGKWLVAGGRDQAVTVWEVSSAEPRAA), 285–345 (GHDN…IKTL), 347–386 (GHDNWIRGLVFHPSGKYLFSVSDDKTIRCWDLSQEGRLVK), 391–430 (AHGHFISCIRWAPPPRNAAAEASETTNGVSKKAPTKPAFQ), and 432–446 (VIATGSADSCVRVFK).

The protein belongs to the WD repeat LIS1/nudF family. Self-associates. Interacts with nudE and dynein.

The protein localises to the cytoplasm. It localises to the cytoskeleton. The protein resides in the spindle pole. Positively regulates the activity of the minus-end directed microtubule motor protein dynein. May enhance dynein-mediated microtubule sliding by targeting dynein to the microtubule plus end. Required for nuclear migration during vegetative growth as well as development. Required for retrograde early endosome (EE) transport from the hyphal tip. Required for localization of dynein to the mitotic spindle poles. Recruits additional proteins to the dynein complex at SPBs. The polypeptide is Nuclear distribution protein nudF (Aspergillus terreus (strain NIH 2624 / FGSC A1156)).